A 440-amino-acid polypeptide reads, in one-letter code: Adenylosuccinate lyase (440 aa).

Residues 4–5, 67–69, and 93–94 each bind N(6)-(1,2-dicarboxyethyl)-AMP; these read RY, KHD, and TS. Residue His-141 is the Proton donor/acceptor of the active site. Gln-212 is a binding site for N(6)-(1,2-dicarboxyethyl)-AMP. Residue Ser-262 is the Proton donor/acceptor of the active site. N(6)-(1,2-dicarboxyethyl)-AMP is bound by residues Ser-263, 268–270, Asn-276, and 307–311; these read KRN and SVERF.

Belongs to the lyase 1 family. Adenylosuccinate lyase subfamily. As to quaternary structure, homotetramer. Residues from neighboring subunits contribute catalytic and substrate-binding residues to each active site.

It catalyses the reaction N(6)-(1,2-dicarboxyethyl)-AMP = fumarate + AMP. The enzyme catalyses (2S)-2-[5-amino-1-(5-phospho-beta-D-ribosyl)imidazole-4-carboxamido]succinate = 5-amino-1-(5-phospho-beta-D-ribosyl)imidazole-4-carboxamide + fumarate. It functions in the pathway purine metabolism; AMP biosynthesis via de novo pathway; AMP from IMP: step 2/2. Its pathway is purine metabolism; IMP biosynthesis via de novo pathway; 5-amino-1-(5-phospho-D-ribosyl)imidazole-4-carboxamide from 5-amino-1-(5-phospho-D-ribosyl)imidazole-4-carboxylate: step 2/2. Catalyzes two reactions in de novo purine nucleotide biosynthesis. Catalyzes the breakdown of 5-aminoimidazole- (N-succinylocarboxamide) ribotide (SAICAR or 2-[5-amino-1-(5-phospho-beta-D-ribosyl)imidazole-4-carboxamido]succinate) to 5-aminoimidazole-4-carboxamide ribotide (AICAR or 5-amino-1-(5-phospho-beta-D-ribosyl)imidazole-4-carboxamide) and fumarate, and of adenylosuccinate (ADS or N(6)-(1,2-dicarboxyethyl)-AMP) to adenosine monophosphate (AMP) and fumarate. This is Adenylosuccinate lyase (purB) from Helicobacter pylori (strain J99 / ATCC 700824) (Campylobacter pylori J99).